Reading from the N-terminus, the 695-residue chain is RING finger protein 145 (695 aa).

The next 13 membrane-spanning stretches (helical) occupy residues 53-73 (YLAL…LTLP), 77-97 (LAKL…HQIS), 123-143 (FITA…VMKT), 146-166 (IWLF…IPIE), 168-188 (IVVI…YFLA), 225-245 (LVVP…QIYT), 275-295 (YSLL…LTLC), 316-336 (TEGV…LQVV), 340-360 (FLLS…MLEI), 384-404 (SLCL…CQFF), 410-430 (LLII…TLFV), 460-480 (LLEF…TVFG), and 482-502 (WTVM…WLRA). The segment at 537–575 (CSICYQDMNSAVITPCSHFFHPGCLKKWLYVQETCPLCH) adopts an RING-type; atypical zinc-finger fold. Positions 589–604 (SGSSTNPVVEQSANNP) are enriched in polar residues. The segment at 589–608 (SGSSTNPVVEQSANNPPQEP) is disordered.

It is found in the membrane. The sequence is that of RING finger protein 145 (rnf145) from Xenopus laevis (African clawed frog).